We begin with the raw amino-acid sequence, 281 residues long: 4-hydroxy-3-methylbut-2-enyl diphosphate reductase (281 aa).

Cys-12 provides a ligand contact to [4Fe-4S] cluster. Residues His-41 and His-74 each contribute to the (2E)-4-hydroxy-3-methylbut-2-enyl diphosphate site. Residues His-41 and His-74 each contribute to the dimethylallyl diphosphate site. Isopentenyl diphosphate is bound by residues His-41 and His-74. Residue Cys-96 coordinates [4Fe-4S] cluster. A (2E)-4-hydroxy-3-methylbut-2-enyl diphosphate-binding site is contributed by His-124. Position 124 (His-124) interacts with dimethylallyl diphosphate. Position 124 (His-124) interacts with isopentenyl diphosphate. Catalysis depends on Glu-126, which acts as the Proton donor. Thr-164 contributes to the (2E)-4-hydroxy-3-methylbut-2-enyl diphosphate binding site. Position 193 (Cys-193) interacts with [4Fe-4S] cluster. (2E)-4-hydroxy-3-methylbut-2-enyl diphosphate contacts are provided by Ser-221, Asn-223, and Ser-265. Dimethylallyl diphosphate-binding residues include Ser-221, Asn-223, and Ser-265. 3 residues coordinate isopentenyl diphosphate: Ser-221, Asn-223, and Ser-265.

The protein belongs to the IspH family. [4Fe-4S] cluster is required as a cofactor.

The catalysed reaction is isopentenyl diphosphate + 2 oxidized [2Fe-2S]-[ferredoxin] + H2O = (2E)-4-hydroxy-3-methylbut-2-enyl diphosphate + 2 reduced [2Fe-2S]-[ferredoxin] + 2 H(+). It catalyses the reaction dimethylallyl diphosphate + 2 oxidized [2Fe-2S]-[ferredoxin] + H2O = (2E)-4-hydroxy-3-methylbut-2-enyl diphosphate + 2 reduced [2Fe-2S]-[ferredoxin] + 2 H(+). It participates in isoprenoid biosynthesis; dimethylallyl diphosphate biosynthesis; dimethylallyl diphosphate from (2E)-4-hydroxy-3-methylbutenyl diphosphate: step 1/1. It functions in the pathway isoprenoid biosynthesis; isopentenyl diphosphate biosynthesis via DXP pathway; isopentenyl diphosphate from 1-deoxy-D-xylulose 5-phosphate: step 6/6. Its function is as follows. Catalyzes the conversion of 1-hydroxy-2-methyl-2-(E)-butenyl 4-diphosphate (HMBPP) into a mixture of isopentenyl diphosphate (IPP) and dimethylallyl diphosphate (DMAPP). Acts in the terminal step of the DOXP/MEP pathway for isoprenoid precursor biosynthesis. This is 4-hydroxy-3-methylbut-2-enyl diphosphate reductase from Oleidesulfovibrio alaskensis (strain ATCC BAA-1058 / DSM 17464 / G20) (Desulfovibrio alaskensis).